The chain runs to 504 residues: Cytochrome P450 3A41 (504 aa).

Cysteine 443 is a heme binding site.

This sequence belongs to the cytochrome P450 family. The cofactor is heme. As to expression, expressed in liver. Also expressed in the kidneys of female mice, with traces in the stomach, ovary, and heart of female mice and in the testis of male mice.

It localises to the endoplasmic reticulum membrane. Its subcellular location is the microsome membrane. The catalysed reaction is an organic molecule + reduced [NADPH--hemoprotein reductase] + O2 = an alcohol + oxidized [NADPH--hemoprotein reductase] + H2O + H(+). The protein is Cytochrome P450 3A41 (Cyp3a41a) of Mus musculus (Mouse).